A 206-amino-acid chain; its full sequence is Small ribosomal subunit protein uS2 (206 aa).

The protein belongs to the universal ribosomal protein uS2 family.

The sequence is that of Small ribosomal subunit protein uS2 from Methanothrix thermoacetophila (strain DSM 6194 / JCM 14653 / NBRC 101360 / PT) (Methanosaeta thermophila).